The sequence spans 107 residues: MEGKVLLCFALLLPFTVAQAAKGDTRRCGYLMMQRCRGDTTETKAWGFNYEEKKCQKETVICGTGGAPRNAFETKKDCDALCKGYSGPQYSMQEMLQHIRDNAKKTG.

The signal sequence occupies residues 1–20; sequence MEGKVLLCFALLLPFTVAQA. Disulfide bonds link Cys28-Cys82, Cys36-Cys62, and Cys55-Cys78. The BPTI/Kunitz inhibitor domain maps to 29-82; it reads GYLMMQRCRGDTTETKAWGFNYEEKKCQKETVICGTGGAPRNAFETKKDCDALC. The Cell attachment site motif lies at 37-39; it reads RGD.

In terms of processing, the N-terminus is blocked. In terms of tissue distribution, expressed in salivary glands.

Its subcellular location is the cytoplasmic vesicle. It localises to the secretory vesicle. It is found in the secreted. Functionally, tick salivary platelet aggregation inhibitor that plays an important part in the anti-hemostatic strategy of ticks. Inhibits platelet aggregation induced by ADP (IC(50)~150 nM), collagen, and platelet activating factor (PAF). Acts by binding to platelet membrane glycoprotein IIb-IIIa (ITGA2B/ITGB3) in a metal ion dependent manner. Does not inhibit aggregation induced by ristocecin, an agonist that aggregates platelets independently from the glycoprotein IIb-IIIa (ITGA2B/ITGB3). In contrast to other tick platelet aggregation inhibitors, this protein does not protect ITGA2B/ITGB3 from dissociation under SDS condition, suggesting it may dissocate much faster than its orthologs. This is Monogrin 2 from Argas monolakensis (Mono lake bird tick).